The chain runs to 138 residues: Putative nickel-responsive regulator (138 aa).

His80, His91, His93, and Cys99 together coordinate Ni(2+).

This sequence belongs to the transcriptional regulatory CopG/NikR family. The cofactor is Ni(2+).

Its function is as follows. Transcriptional regulator. This is Putative nickel-responsive regulator from Campylobacter hominis (strain ATCC BAA-381 / DSM 21671 / CCUG 45161 / LMG 19568 / NCTC 13146 / CH001A).